A 273-amino-acid polypeptide reads, in one-letter code: Formamidopyrimidine-DNA glycosylase (273 aa).

Pro2 acts as the Schiff-base intermediate with DNA in catalysis. Catalysis depends on Glu3, which acts as the Proton donor. The active-site Proton donor; for beta-elimination activity is the Lys58. 3 residues coordinate DNA: His91, Arg109, and Arg154. The FPG-type zinc-finger motif lies at 239-273 (FCYARTGEPCRICKTPIRQIVQGQRSTFYCPNCQK). Residue Arg263 is the Proton donor; for delta-elimination activity of the active site.

It belongs to the FPG family. In terms of assembly, monomer. Zn(2+) serves as cofactor.

The enzyme catalyses Hydrolysis of DNA containing ring-opened 7-methylguanine residues, releasing 2,6-diamino-4-hydroxy-5-(N-methyl)formamidopyrimidine.. The catalysed reaction is 2'-deoxyribonucleotide-(2'-deoxyribose 5'-phosphate)-2'-deoxyribonucleotide-DNA = a 3'-end 2'-deoxyribonucleotide-(2,3-dehydro-2,3-deoxyribose 5'-phosphate)-DNA + a 5'-end 5'-phospho-2'-deoxyribonucleoside-DNA + H(+). Involved in base excision repair of DNA damaged by oxidation or by mutagenic agents. Acts as a DNA glycosylase that recognizes and removes damaged bases. Has a preference for oxidized purines, such as 7,8-dihydro-8-oxoguanine (8-oxoG). Has AP (apurinic/apyrimidinic) lyase activity and introduces nicks in the DNA strand. Cleaves the DNA backbone by beta-delta elimination to generate a single-strand break at the site of the removed base with both 3'- and 5'-phosphates. The protein is Formamidopyrimidine-DNA glycosylase of Janthinobacterium sp. (strain Marseille) (Minibacterium massiliensis).